A 223-amino-acid chain; its full sequence is Cuticular glutathione peroxidase (223 aa).

Positions 1–19 (MSAQLLILSHMVLLQLIVA) are cleaved as a signal peptide. Residue N39 is glycosylated (N-linked (GlcNAc...) asparagine). The active site involves C74. N92 is a glycosylation site (N-linked (GlcNAc...) asparagine).

The protein belongs to the glutathione peroxidase family. Homotetramer.

The protein localises to the secreted. The catalysed reaction is 2 glutathione + H2O2 = glutathione disulfide + 2 H2O. Its function is as follows. Could inhibit the oxidative burst of leukocytes and neutralize the secondary products of lipid peroxidation, thus providing the resistance of these parasites to immune effector mechanisms and their persistence in the mammalian host. It may also be involved in the formation of cross-linking residues such as dityrosine, trityrosine and isotrityrosine identified in cuticular collagen. Highly cross-linked external cortex may also serve to protect the parasite from immune attack. The chain is Cuticular glutathione peroxidase from Brugia malayi (Filarial nematode worm).